A 157-amino-acid polypeptide reads, in one-letter code: MARRREIPKRQVLPDPKFGDTTLTKFVNMIMVSGKKAVAEKIVYDALDVVVDRKKGGEHAVLLREALENVGPMVEVKSRRVGGATYQVPVEVRSERKTALAMRWIVEAARKRSEKGMMLRLAGELSDALENRGSAIKKKEDTHRMAEANKAFSHFRW.

This sequence belongs to the universal ribosomal protein uS7 family. As to quaternary structure, part of the 30S ribosomal subunit. Contacts proteins S9 and S11.

One of the primary rRNA binding proteins, it binds directly to 16S rRNA where it nucleates assembly of the head domain of the 30S subunit. Is located at the subunit interface close to the decoding center, probably blocks exit of the E-site tRNA. The chain is Small ribosomal subunit protein uS7 from Hydrogenovibrio crunogenus (strain DSM 25203 / XCL-2) (Thiomicrospira crunogena).